The sequence spans 428 residues: Trigger factor (428 aa).

The PPIase FKBP-type domain occupies 163–248 (GDMVIIDYKG…IHEIKEKEVP (86 aa)).

It belongs to the FKBP-type PPIase family. Tig subfamily.

Its subcellular location is the cytoplasm. The enzyme catalyses [protein]-peptidylproline (omega=180) = [protein]-peptidylproline (omega=0). Its function is as follows. Involved in protein export. Acts as a chaperone by maintaining the newly synthesized protein in an open conformation. Functions as a peptidyl-prolyl cis-trans isomerase. The protein is Trigger factor of Alkaliphilus oremlandii (strain OhILAs) (Clostridium oremlandii (strain OhILAs)).